A 136-amino-acid polypeptide reads, in one-letter code: MLAPKKQKFRKAHKGRVASTAKAGTTLAFGSFGLKSIDGWRVTARQIEAGRKAATRCMKRQGRLWIRIFPDVPVSQKPAEVRMGKGKGSPEFFAVRVSPGRIMFEIEGVEENVALRALELASAKLPVRTRIVRRYE.

It belongs to the universal ribosomal protein uL16 family. As to quaternary structure, part of the 50S ribosomal subunit.

In terms of biological role, binds 23S rRNA and is also seen to make contacts with the A and possibly P site tRNAs. The polypeptide is Large ribosomal subunit protein uL16 (Rickettsia rickettsii (strain Iowa)).